Reading from the N-terminus, the 1292-residue chain is Kinesin-like protein KIN-12A (1292 aa).

Residues 1-86 (MKKHFTLPRN…LSAETATESG (86 aa)) are disordered. A compositionally biased stretch (low complexity) spans 19 to 29 (PHSPNPSISKS). A compositionally biased stretch (pro residues) spans 62 to 71 (PLPPRPPPSN). A Kinesin motor domain is found at 91–426 (GVKVIVRMKP…LRFAQRAKAI (336 aa)). ATP is bound at residue 165–172 (GQTGSGKT). Microtubules-binding stretches follow at residues 293 to 297 (SSRSH), 326 to 332 (VDLAGSE), and 375 to 379 (HIPYR). The neck stretch occupies residues 424-461 (KAIQNKAVVNEVMQDDVNFLRGVIHQLRDELQRMKNDG). The segment at 677–724 (SVSPTIRNSRKSLKTSELSTASQKDSEGENLVTEAADPSPATSKKMNN) is disordered. Coiled-coil stretches lie at residues 945-992 (EVLK…CYID) and 1047-1232 (SEEL…NQLV).

It belongs to the TRAFAC class myosin-kinesin ATPase superfamily. Kinesin family. KIN-12 subfamily. In terms of assembly, homodimer and heterodimer with KIN12B. Interacts with TIO.

It is found in the cytoplasm. The protein resides in the cytoskeleton. The protein localises to the phragmoplast. Plus-end directed kinesin-like motor enzyme that plays a critical role in the organization of phragmoplast microtubules during cytokinesis. Constitutes a signaling module in association with serine/threonine-protein kinase TIO that is required to support phragmoplast expansion and cell-plate growth in plant cells. Binds microtubules in an ATP-sensitive manner. This chain is Kinesin-like protein KIN-12A, found in Arabidopsis thaliana (Mouse-ear cress).